A 319-amino-acid chain; its full sequence is Dehydrogenase/reductase SDR family member 9 (319 aa).

An N-terminal signal peptide occupies residues 1–20; the sequence is MLLWVLALLFLCAFLWNYKG. Residues 34–58 and Asp83 each bind NAD(+); that span reads ITGC…RVIA. Position 164 (Ser164) interacts with substrate. The active-site Proton acceptor is the Tyr176. An NAD(+)-binding site is contributed by Lys180.

It belongs to the short-chain dehydrogenases/reductases (SDR) family. In terms of assembly, homotetramer. As to expression, highly expressed in epithelium of estrus uterus.

Its subcellular location is the microsome membrane. The protein localises to the endoplasmic reticulum membrane. It carries out the reaction 3beta-hydroxy-5alpha-pregnane-20-one + NAD(+) = 5alpha-pregnane-3,20-dione + NADH + H(+). The enzyme catalyses 17beta-hydroxy-5alpha-androstan-3-one + NAD(+) = 5alpha-androstan-3,17-dione + NADH + H(+). It catalyses the reaction androsterone + NAD(+) = 5alpha-androstan-3,17-dione + NADH + H(+). The catalysed reaction is 5alpha-androstane-3alpha,17beta-diol + NAD(+) = 17beta-hydroxy-5alpha-androstan-3-one + NADH + H(+). It carries out the reaction all-trans-retinol + NAD(+) = all-trans-retinal + NADH + H(+). The enzyme catalyses 3alpha-hydroxy-5alpha-pregnan-20-one + NAD(+) = 5alpha-pregnane-3,20-dione + NADH + H(+). Its function is as follows. 3-alpha-hydroxysteroid dehydrogenase that converts 3-alpha-tetrahydroprogesterone (allopregnanolone) to dihydroxyprogesterone and 3-alpha-androstanediol to dihydroxyprogesterone. Plays also role in the biosynthesis of retinoic acid from retinaldehyde. Can utilize both NADH and NADPH. The protein is Dehydrogenase/reductase SDR family member 9 (Dhrs9) of Rattus norvegicus (Rat).